The chain runs to 171 residues: 6,7-dimethyl-8-ribityllumazine synthase (171 aa).

5-amino-6-(D-ribitylamino)uracil-binding positions include phenylalanine 24, 58-60 (ALE), and 82-84 (AVI). 87–88 (ET) contributes to the (2S)-2-hydroxy-3-oxobutyl phosphate binding site. The active-site Proton donor is histidine 90. Asparagine 115 lines the 5-amino-6-(D-ribitylamino)uracil pocket. (2S)-2-hydroxy-3-oxobutyl phosphate is bound at residue arginine 129. The segment at 150–171 (ALDQLGDDEDEEEDEEDEEERA) is disordered. Residues 154 to 171 (LGDDEDEEEDEEDEEERA) show a composition bias toward acidic residues.

This sequence belongs to the DMRL synthase family.

The enzyme catalyses (2S)-2-hydroxy-3-oxobutyl phosphate + 5-amino-6-(D-ribitylamino)uracil = 6,7-dimethyl-8-(1-D-ribityl)lumazine + phosphate + 2 H2O + H(+). It functions in the pathway cofactor biosynthesis; riboflavin biosynthesis; riboflavin from 2-hydroxy-3-oxobutyl phosphate and 5-amino-6-(D-ribitylamino)uracil: step 1/2. Functionally, catalyzes the formation of 6,7-dimethyl-8-ribityllumazine by condensation of 5-amino-6-(D-ribitylamino)uracil with 3,4-dihydroxy-2-butanone 4-phosphate. This is the penultimate step in the biosynthesis of riboflavin. This Burkholderia ambifaria (strain ATCC BAA-244 / DSM 16087 / CCUG 44356 / LMG 19182 / AMMD) (Burkholderia cepacia (strain AMMD)) protein is 6,7-dimethyl-8-ribityllumazine synthase.